Reading from the N-terminus, the 401-residue chain is Acetate kinase (401 aa).

Residue asparagine 7 coordinates Mg(2+). Lysine 14 is a binding site for ATP. Residue arginine 90 coordinates substrate. Aspartate 147 functions as the Proton donor/acceptor in the catalytic mechanism. ATP-binding positions include 207–211 (HLGNG), 282–284 (DFR), and 330–334 (GVGEN). Position 383 (glutamate 383) interacts with Mg(2+).

The protein belongs to the acetokinase family. In terms of assembly, homodimer. It depends on Mg(2+) as a cofactor. Mn(2+) is required as a cofactor.

It localises to the cytoplasm. It carries out the reaction acetate + ATP = acetyl phosphate + ADP. Its pathway is metabolic intermediate biosynthesis; acetyl-CoA biosynthesis; acetyl-CoA from acetate: step 1/2. Its function is as follows. Catalyzes the formation of acetyl phosphate from acetate and ATP. Can also catalyze the reverse reaction. In Clostridium novyi (strain NT), this protein is Acetate kinase.